Here is a 145-residue protein sequence, read N- to C-terminus: UPF0260 protein VC_1058 (145 aa).

This sequence belongs to the UPF0260 family.

The chain is UPF0260 protein VC_1058 from Vibrio cholerae serotype O1 (strain ATCC 39315 / El Tor Inaba N16961).